We begin with the raw amino-acid sequence, 370 residues long: Peptide chain release factor 1 (370 aa).

Q231 is modified (N5-methylglutamine). Positions 284-293 are enriched in basic and acidic residues; the sequence is AREERERETR. A disordered region spans residues 284 to 303; sequence AREERERETRAAQVGTGERS.

The protein belongs to the prokaryotic/mitochondrial release factor family. Post-translationally, methylated by PrmC. Methylation increases the termination efficiency of RF1.

The protein resides in the cytoplasm. Its function is as follows. Peptide chain release factor 1 directs the termination of translation in response to the peptide chain termination codons UAG and UAA. The protein is Peptide chain release factor 1 of Deinococcus geothermalis (strain DSM 11300 / CIP 105573 / AG-3a).